Reading from the N-terminus, the 274-residue chain is tRNA pseudouridine synthase A (274 aa).

The Nucleophile role is filled by Asp-51. Tyr-109 serves as a coordination point for substrate.

Belongs to the tRNA pseudouridine synthase TruA family. In terms of assembly, homodimer.

It catalyses the reaction uridine(38/39/40) in tRNA = pseudouridine(38/39/40) in tRNA. Formation of pseudouridine at positions 38, 39 and 40 in the anticodon stem and loop of transfer RNAs. The chain is tRNA pseudouridine synthase A from Acidovorax sp. (strain JS42).